The following is a 623-amino-acid chain: Chaperone protein DnaK (623 aa).

Phosphothreonine; by autocatalysis is present on Thr197. Basic and acidic residues predominate over residues 595–615 (AENMYKKDEPNTANDKKKKDD). Residues 595-623 (AENMYKKDEPNTANDKKKKDDDVIDAEVE) are disordered.

This sequence belongs to the heat shock protein 70 family.

In terms of biological role, acts as a chaperone. The protein is Chaperone protein DnaK of Campylobacter jejuni subsp. jejuni serotype O:6 (strain 81116 / NCTC 11828).